The chain runs to 555 residues: F-box protein COS111 (555 aa).

2 disordered regions span residues 31–82 (MSVS…SVSN) and 124–147 (DHSI…KQHH). Positions 32–42 (SVSSRSSQEES) are enriched in low complexity. Positions 48–61 (ESVSSLSMQEQQTE) are enriched in polar residues. Low complexity predominate over residues 129–142 (SGVTRSTVSTVRPT). The 51-residue stretch at 196-246 (HKDLNSLPHEIMSKIVSHLDQRDVTMCLYVNKNMYSTAVRQLYKEPFFSST) folds into the F-box domain. Residues 327–346 (SSSSLSCSRTSSNSNSSTES) are compositionally biased toward low complexity. The interval 327–354 (SSSSLSCSRTSSNSNSSTESKPVKKRRS) is disordered.

F-box protein probably involved in ubiquitin conjugation pathway. This chain is F-box protein COS111 (COS111), found in Yarrowia lipolytica (strain CLIB 122 / E 150) (Yeast).